The chain runs to 591 residues: L-gulonolactone oxidase 2 (591 aa).

Residues 1–27 form the signal peptide; it reads MAFTFPPSYRTLVGLYYIFTLMHTAVS. Positions 56–238 constitute an FAD-binding PCMH-type domain; it reads STCRAANVAY…SQVTFELQPM (183 aa).

The protein belongs to the oxygen-dependent FAD-linked oxidoreductase family. FAD is required as a cofactor.

It carries out the reaction L-gulono-1,4-lactone + O2 = L-ascorbate + H2O2 + H(+). Its pathway is cofactor biosynthesis; L-ascorbate biosynthesis. In terms of biological role, catalyzes the oxidation of L-gulono-1,4-lactone to ascorbic acid. L-gulono-1,4-lactone is oxidized to hydrogen peroxide and L-xylo-hexulonolactone which spontaneously isomerizes to L-ascorbate. This chain is L-gulonolactone oxidase 2, found in Arabidopsis thaliana (Mouse-ear cress).